Here is a 1282-residue protein sequence, read N- to C-terminus: Clustered mitochondria protein homolog (1282 aa).

A disordered region spans residues 1–43 (MEQNNGTTEHPKEVLDQTNPSNEVTGVPNGNHAEGEGDQNAGE). Residues 341–585 (DITRPQENYL…RITPLDVLWY (245 aa)) enclose the Clu domain. Composition is skewed to basic and acidic residues over residues 631 to 641 (EAEEKAEESKP) and 653 to 669 (ESEKKETTSPDQERVDI). Disordered stretches follow at residues 631–669 (EAEEKAEESKPNGEAADASENAESEKKETTSPDQERVDI) and 892–936 (RSQL…PAPA). Over residues 924-936 (QASPRPAQSPAPA) the composition is skewed to low complexity. Residues 1003–1036 (AKLYHQLSMLYYQSDDKDAAVELARKAVIVTERT) form a TPR repeat. The interval 1202 to 1282 (ANLPTRLGTK…SKQSTVKPSS (81 aa)) is disordered. A compositionally biased stretch (polar residues) spans 1212 to 1223 (PQPQVGQTTSEM). A compositionally biased stretch (basic residues) spans 1257–1272 (TKQKKRAAARNPKLRG). The segment covering 1273–1282 (SKQSTVKPSS) has biased composition (polar residues).

It belongs to the CLU family. In terms of assembly, may associate with the eukaryotic translation initiation factor 3 (eIF-3) complex.

The protein resides in the cytoplasm. Functionally, mRNA-binding protein involved in proper cytoplasmic distribution of mitochondria. The sequence is that of Clustered mitochondria protein homolog from Coccidioides immitis (strain RS) (Valley fever fungus).